An 878-amino-acid chain; its full sequence is NUT family member 2B (878 aa).

Disordered regions lie at residues 273 to 324 (WSQG…DDSC), 417 to 512 (QKSQ…PEEI), 527 to 560 (LLGPSLGATGEPEKQREEGKVKQPQEEDWTPPDP), 624 to 693 (PPLK…GMAR), 709 to 757 (LRAA…EEEE), and 775 to 878 (WLPQ…HCSQ). Composition is skewed to pro residues over residues 278 to 288 (PLPPPPPPAAQ) and 427 to 444 (CLPPPATPRLEPRGPPAP). Over residues 476-487 (TKARRPPPRPHR) the composition is skewed to basic residues. A compositionally biased stretch (basic and acidic residues) spans 537–551 (EPEKQREEGKVKQPQ).

The protein belongs to the NUT family.

The sequence is that of NUT family member 2B (NUTM2B) from Homo sapiens (Human).